The chain runs to 298 residues: Glycine--tRNA ligase alpha subunit (298 aa).

This sequence belongs to the class-II aminoacyl-tRNA synthetase family. Tetramer of two alpha and two beta subunits.

It is found in the cytoplasm. The enzyme catalyses tRNA(Gly) + glycine + ATP = glycyl-tRNA(Gly) + AMP + diphosphate. This Lacticaseibacillus paracasei (strain ATCC 334 / BCRC 17002 / CCUG 31169 / CIP 107868 / KCTC 3260 / NRRL B-441) (Lactobacillus paracasei) protein is Glycine--tRNA ligase alpha subunit.